A 102-amino-acid polypeptide reads, in one-letter code: uncharacterized protein (102 aa).

Residues Cys10, Cys16, and Cys55 each coordinate [3Fe-4S] cluster. The segment at 66-102 (DAGDDERASADPARSPAEAERHAAKDQRIPGGHDGTV) is disordered. Residues 82–93 (AEAERHAAKDQR) show a composition bias toward basic and acidic residues.

Requires [3Fe-4S] cluster as cofactor.

In terms of biological role, electron transport protein for the cytochrome systems. This is an uncharacterized protein from Sinorhizobium fredii (strain NBRC 101917 / NGR234).